A 323-amino-acid polypeptide reads, in one-letter code: Elongation factor P--(R)-beta-lysine ligase (323 aa).

76 to 78 is a substrate binding site; sequence SPE. Residues 100–102 and Asn-109 each bind ATP; that span reads RNE. Substrate is bound at residue Tyr-118. 242 to 243 is a binding site for ATP; the sequence is EL. Glu-249 is a binding site for substrate. Gly-298 serves as a coordination point for ATP.

Belongs to the class-II aminoacyl-tRNA synthetase family. EpmA subfamily. In terms of assembly, homodimer.

It catalyses the reaction D-beta-lysine + L-lysyl-[protein] + ATP = N(6)-((3R)-3,6-diaminohexanoyl)-L-lysyl-[protein] + AMP + diphosphate + H(+). In terms of biological role, with EpmB is involved in the beta-lysylation step of the post-translational modification of translation elongation factor P (EF-P). Catalyzes the ATP-dependent activation of (R)-beta-lysine produced by EpmB, forming a lysyl-adenylate, from which the beta-lysyl moiety is then transferred to the epsilon-amino group of a conserved specific lysine residue in EF-P. This is Elongation factor P--(R)-beta-lysine ligase from Histophilus somni (strain 129Pt) (Haemophilus somnus).